Consider the following 354-residue polypeptide: uncharacterized protein (354 aa).

This sequence belongs to the asfivirus B354L family.

This is an uncharacterized protein from Ornithodoros (relapsing fever ticks).